A 93-amino-acid polypeptide reads, in one-letter code: Defensin-like protein 229 (93 aa).

The N-terminal stretch at 1 to 19 (MKSTTLFMVSCVLIFCVLS) is a signal peptide. Disulfide bonds link C38-C93, C48-C72, C56-C84, and C70-C86.

It belongs to the DEFL family. Flower buds.

The protein resides in the secreted. This is Defensin-like protein 229 (SCRL27) from Arabidopsis thaliana (Mouse-ear cress).